The primary structure comprises 346 residues: Phosphoribosylformylglycinamidine cyclo-ligase (346 aa).

The protein belongs to the AIR synthase family.

The protein resides in the cytoplasm. The catalysed reaction is 2-formamido-N(1)-(5-O-phospho-beta-D-ribosyl)acetamidine + ATP = 5-amino-1-(5-phospho-beta-D-ribosyl)imidazole + ADP + phosphate + H(+). Its pathway is purine metabolism; IMP biosynthesis via de novo pathway; 5-amino-1-(5-phospho-D-ribosyl)imidazole from N(2)-formyl-N(1)-(5-phospho-D-ribosyl)glycinamide: step 2/2. The protein is Phosphoribosylformylglycinamidine cyclo-ligase of Geobacillus sp. (strain WCH70).